The sequence spans 636 residues: Chaperone protein DnaK (636 aa).

Positions 579–636 are disordered; it reads ELYKNAAPPPGADGQQGADGQQGADGQQGADGQQGADGQQGADGQTTESSSNDETKTN. Over residues 590-623 the composition is skewed to low complexity; that stretch reads ADGQQGADGQQGADGQQGADGQQGADGQQGADGQ.

The protein belongs to the heat shock protein 70 family.

Functionally, acts as a chaperone. The protein is Chaperone protein DnaK of Nitrosopumilus maritimus (strain SCM1).